The primary structure comprises 401 residues: Tyrosine--tRNA ligase (401 aa).

The 'HIGH' region motif lies at 45 to 54 (PTAPDLHLGH). The short motif at 230-234 (KMSKS) is the 'KMSKS' region element. K233 is a binding site for ATP. An S4 RNA-binding domain is found at 339–399 (IWLAKALVEC…GKRKFAKLKV (61 aa)).

Belongs to the class-I aminoacyl-tRNA synthetase family. TyrS type 2 subfamily. In terms of assembly, homodimer.

The protein resides in the cytoplasm. The enzyme catalyses tRNA(Tyr) + L-tyrosine + ATP = L-tyrosyl-tRNA(Tyr) + AMP + diphosphate + H(+). Catalyzes the attachment of tyrosine to tRNA(Tyr) in a two-step reaction: tyrosine is first activated by ATP to form Tyr-AMP and then transferred to the acceptor end of tRNA(Tyr). The chain is Tyrosine--tRNA ligase from Campylobacter jejuni subsp. jejuni serotype O:2 (strain ATCC 700819 / NCTC 11168).